The primary structure comprises 209 residues: FMN-dependent NADH:quinone oxidoreductase (209 aa).

Residues Ser9 and 15-17 (SNS) each bind FMN.

The protein belongs to the azoreductase type 1 family. Homodimer. The cofactor is FMN.

The catalysed reaction is 2 a quinone + NADH + H(+) = 2 a 1,4-benzosemiquinone + NAD(+). The enzyme catalyses N,N-dimethyl-1,4-phenylenediamine + anthranilate + 2 NAD(+) = 2-(4-dimethylaminophenyl)diazenylbenzoate + 2 NADH + 2 H(+). Functionally, quinone reductase that provides resistance to thiol-specific stress caused by electrophilic quinones. Its function is as follows. Also exhibits azoreductase activity. Catalyzes the reductive cleavage of the azo bond in aromatic azo compounds to the corresponding amines. This is FMN-dependent NADH:quinone oxidoreductase from Bordetella bronchiseptica (strain ATCC BAA-588 / NCTC 13252 / RB50) (Alcaligenes bronchisepticus).